Here is a 398-residue protein sequence, read N- to C-terminus: Nicotinate phosphoribosyltransferase (398 aa).

Position 222 is a phosphohistidine; by autocatalysis (His222).

This sequence belongs to the NAPRTase family. Transiently phosphorylated on a His residue during the reaction cycle. Phosphorylation strongly increases the affinity for substrates and increases the rate of nicotinate D-ribonucleotide production. Dephosphorylation regenerates the low-affinity form of the enzyme, leading to product release.

It carries out the reaction nicotinate + 5-phospho-alpha-D-ribose 1-diphosphate + ATP + H2O = nicotinate beta-D-ribonucleotide + ADP + phosphate + diphosphate. The protein operates within cofactor biosynthesis; NAD(+) biosynthesis; nicotinate D-ribonucleotide from nicotinate: step 1/1. In terms of biological role, catalyzes the synthesis of beta-nicotinate D-ribonucleotide from nicotinate and 5-phospho-D-ribose 1-phosphate at the expense of ATP. This chain is Nicotinate phosphoribosyltransferase, found in Acidovorax ebreus (strain TPSY) (Diaphorobacter sp. (strain TPSY)).